Here is a 708-residue protein sequence, read N- to C-terminus: Metal-pseudopaline receptor CntO (708 aa).

A signal peptide spans 1–21 (MRVSVSLVLGVGLGCSSPALW). Positions 63–169 (RIEDIPQAIS…PGGTVNLVTK (107 aa)) constitute a TBDR plug domain. One can recognise a TBDR beta-barrel domain in the interval 174 to 708 (ERFARLHASA…NLTMSLTLNY (535 aa)).

Belongs to the TonB-dependent receptor family.

The protein localises to the cell outer membrane. Its function is as follows. Transports the metallophore pseudopaline, which is involved in the acquisition of nickel and zinc, and thus enables bacterial growth inside the host, where metal access is limited. Is probably involved in the import of pseudopaline-metal complexes. The protein is Metal-pseudopaline receptor CntO of Pseudomonas aeruginosa (strain UCBPP-PA14).